The sequence spans 200 residues: Nucleoside triphosphate pyrophosphatase (200 aa).

The active-site Proton acceptor is the Asp79.

This sequence belongs to the Maf family. The cofactor is a divalent metal cation.

Its subcellular location is the cytoplasm. It carries out the reaction a ribonucleoside 5'-triphosphate + H2O = a ribonucleoside 5'-phosphate + diphosphate + H(+). It catalyses the reaction a 2'-deoxyribonucleoside 5'-triphosphate + H2O = a 2'-deoxyribonucleoside 5'-phosphate + diphosphate + H(+). Nucleoside triphosphate pyrophosphatase. May have a dual role in cell division arrest and in preventing the incorporation of modified nucleotides into cellular nucleic acids. The chain is Nucleoside triphosphate pyrophosphatase from Legionella pneumophila (strain Lens).